Here is a 606-residue protein sequence, read N- to C-terminus: Acetylcholinesterase (606 aa).

The first 28 residues, 1–28, serve as a signal peptide directing secretion; that stretch reads MPSCQPGKMPAPWPWWLQLLLCIPSCVA. C98 and C125 are disulfide-bonded. S231 functions as the Acyl-ester intermediate in the catalytic mechanism. An intrachain disulfide couples C285 to C296. N289 carries an N-linked (GlcNAc...) asparagine glycan. The Charge relay system role is filled by E358. The N-linked (GlcNAc...) asparagine glycan is linked to N374. C433 and C552 are disulfide-bonded. H471 functions as the Charge relay system in the catalytic mechanism. N-linked (GlcNAc...) asparagine glycosylation is present at N484.

Belongs to the type-B carboxylesterase/lipase family. Isoform S is monomeric. Isoform T can form oligomers, including collagen-tailed forms. Post-translationally, the N-terminus is blocked. In terms of tissue distribution, liver and muscle contain both isoform T and isoform S. Venom gland predominantly contains isoform S.

It localises to the synapse. The protein localises to the secreted. The protein resides in the cell membrane. The enzyme catalyses acetylcholine + H2O = choline + acetate + H(+). Its activity is regulated as follows. Inhibited by active site inhibitors: edrophonium, trimethyl-(m-acetamidopheny1)-ammonium iodide, and trimethyl-(p-acetarnidopheny1)-ammonium iodide. Inhibited by both active and peripheral site inhibitors: decamethonium, and BW284c51. Inhibited by peripheral site inhibitors: snake acetylcholinesterase fasciculin-2, propidium, gallamine, D-tubocurarine, and tacrine. Also inhibited by antibodies Elec410 and Fab410. In muscle, it terminates signal transduction at the neuromuscular junction by rapid hydrolysis of the acetylcholine released into the synaptic cleft. In liver, its function is unclear: it could serve as a safeguard against any diffusion of acetylcholine from synapses into the circulation. In venom, its toxic role is unclear: it could result in less musculatory control by rapidly hydrolyzing acetylcholine, or that it works synergistically with alkaline phosphatase (ALP) in paralyzing prey through hypotension. The protein is Acetylcholinesterase (ACHE) of Bungarus fasciatus (Banded krait).